Consider the following 176-residue polypeptide: Large ribosomal subunit protein uL6 (176 aa).

The protein belongs to the universal ribosomal protein uL6 family. In terms of assembly, part of the 50S ribosomal subunit.

Its function is as follows. This protein binds to the 23S rRNA, and is important in its secondary structure. It is located near the subunit interface in the base of the L7/L12 stalk, and near the tRNA binding site of the peptidyltransferase center. This chain is Large ribosomal subunit protein uL6, found in Burkholderia multivorans (strain ATCC 17616 / 249).